Here is a 344-residue protein sequence, read N- to C-terminus: Glycerol-3-phosphate dehydrogenase [NAD(P)+] (344 aa).

Residues Ser-11, Trp-12, His-32, Arg-33, and Lys-106 each contribute to the NADPH site. Sn-glycerol 3-phosphate-binding residues include Lys-106, Gly-136, and Ser-138. Ala-140 is an NADPH binding site. Sn-glycerol 3-phosphate-binding residues include Lys-192, Asp-245, Ser-255, Arg-256, and Asn-257. Residue Lys-192 is the Proton acceptor of the active site. Arg-256 contacts NADPH. NADPH contacts are provided by Val-280 and Glu-282.

It belongs to the NAD-dependent glycerol-3-phosphate dehydrogenase family.

The protein resides in the cytoplasm. The enzyme catalyses sn-glycerol 3-phosphate + NAD(+) = dihydroxyacetone phosphate + NADH + H(+). The catalysed reaction is sn-glycerol 3-phosphate + NADP(+) = dihydroxyacetone phosphate + NADPH + H(+). Its pathway is membrane lipid metabolism; glycerophospholipid metabolism. Functionally, catalyzes the reduction of the glycolytic intermediate dihydroxyacetone phosphate (DHAP) to sn-glycerol 3-phosphate (G3P), the key precursor for phospholipid synthesis. The protein is Glycerol-3-phosphate dehydrogenase [NAD(P)+] of Geobacillus kaustophilus (strain HTA426).